The sequence spans 397 residues: Phosphopentomutase (397 aa).

Residues aspartate 12, aspartate 289, histidine 294, aspartate 330, histidine 331, and histidine 342 each contribute to the Mn(2+) site.

Belongs to the phosphopentomutase family. It depends on Mn(2+) as a cofactor.

It is found in the cytoplasm. It catalyses the reaction 2-deoxy-alpha-D-ribose 1-phosphate = 2-deoxy-D-ribose 5-phosphate. The enzyme catalyses alpha-D-ribose 1-phosphate = D-ribose 5-phosphate. It participates in carbohydrate degradation; 2-deoxy-D-ribose 1-phosphate degradation; D-glyceraldehyde 3-phosphate and acetaldehyde from 2-deoxy-alpha-D-ribose 1-phosphate: step 1/2. Isomerase that catalyzes the conversion of deoxy-ribose 1-phosphate (dRib-1-P) and ribose 1-phosphate (Rib-1-P) to deoxy-ribose 5-phosphate (dRib-5-P) and ribose 5-phosphate (Rib-5-P), respectively. This chain is Phosphopentomutase, found in Limosilactobacillus reuteri (strain DSM 20016) (Lactobacillus reuteri).